Reading from the N-terminus, the 190-residue chain is Isopentenyl-diphosphate Delta-isomerase (190 aa).

Mn(2+) is bound by residues H27 and H34. The Nudix hydrolase domain occupies 32–166 (ALHLAFSCHV…PWAFSPWLTL (135 aa)). C69 is an active-site residue. A Mn(2+)-binding site is contributed by H71. E89 serves as a coordination point for Mg(2+). Residues E116 and E118 each contribute to the Mn(2+) site. E118 is an active-site residue.

It belongs to the IPP isomerase type 1 family. Mg(2+) serves as cofactor. Mn(2+) is required as a cofactor.

It localises to the cytoplasm. It catalyses the reaction isopentenyl diphosphate = dimethylallyl diphosphate. It participates in isoprenoid biosynthesis; dimethylallyl diphosphate biosynthesis; dimethylallyl diphosphate from isopentenyl diphosphate: step 1/1. In terms of biological role, catalyzes the 1,3-allylic rearrangement of the homoallylic substrate isopentenyl (IPP) to its highly electrophilic allylic isomer, dimethylallyl diphosphate (DMAPP). The chain is Isopentenyl-diphosphate Delta-isomerase from Clavibacter sepedonicus (Clavibacter michiganensis subsp. sepedonicus).